Consider the following 260-residue polypeptide: HTH-type transcriptional repressor NanR (260 aa).

One can recognise an HTH gntR-type domain in the interval 27–95 (KKLSEMVEEE…NGERARVSRP (69 aa)). The segment at residues 55–74 (ERELMAFFNVGRPSVREALA) is a DNA-binding region (H-T-H motif).

Belongs to the NanR family.

Transcriptional repressor that controls expression of the genes required for the catabolism of sialic acids. The protein is HTH-type transcriptional repressor NanR of Citrobacter rodentium (strain ICC168) (Citrobacter freundii biotype 4280).